We begin with the raw amino-acid sequence, 727 residues long: LIM domain-binding protein 3 (727 aa).

Positions 1 to 84 (MSYSVTLTGP…NLSLTLQKSK (84 aa)) constitute a PDZ domain. 3 positions are modified to phosphoserine: Ser-44, Ser-121, and Ser-123. The tract at residues 86 to 197 (PIPISTTAPP…GSSQPRQYNN (112 aa)) is disordered. Positions 140-156 (PTFSPAFSRPSAFSSLA) are enriched in low complexity. A compositionally biased stretch (polar residues) spans 188-197 (GSSQPRQYNN). A Phosphoserine modification is found at Ser-217. Arg-219 is modified (omega-N-methylarginine). Ser-223 is subject to Phosphoserine. Disordered regions lie at residues 284–440 (TEFM…YTPS) and 472–529 (APSV…PQVP). Positions 312–385 (ATTPLLPASA…SAPATHTSYS (74 aa)) are enriched in low complexity. The segment covering 428–440 (PYTPSPAPAYTPS) has biased composition (pro residues). A compositionally biased stretch (polar residues) spans 494-513 (DSFSQKFAPGKSTTSISKQT). Omega-N-methylarginine occurs at positions 516 and 533. LIM zinc-binding domains are found at residues 549 to 607 (PLCG…QFFA), 608 to 667 (PLCA…LFST), and 668 to 727 (KCHG…TINL).

As to quaternary structure, interacts via its LIM domains with various PKC isoforms. Interacts via its PDZ domain with the ACTN2 C-terminal region. Interacts with MYOZ1, MYOZ2 and MYOZ3. In terms of tissue distribution, expressed primarily in skeletal muscle and to a lesser extent in heart. Also detected in brain and placenta.

The protein localises to the cytoplasm. Its subcellular location is the perinuclear region. It is found in the cell projection. It localises to the pseudopodium. The protein resides in the cytoskeleton. The protein localises to the myofibril. Its subcellular location is the sarcomere. It is found in the z line. Its function is as follows. May function as an adapter in striated muscle to couple protein kinase C-mediated signaling via its LIM domains to the cytoskeleton. In Homo sapiens (Human), this protein is LIM domain-binding protein 3.